The following is a 206-amino-acid chain: N-(5'-phosphoribosyl)anthranilate isomerase (206 aa).

The protein belongs to the TrpF family.

It catalyses the reaction N-(5-phospho-beta-D-ribosyl)anthranilate = 1-(2-carboxyphenylamino)-1-deoxy-D-ribulose 5-phosphate. It functions in the pathway amino-acid biosynthesis; L-tryptophan biosynthesis; L-tryptophan from chorismate: step 3/5. The sequence is that of N-(5'-phosphoribosyl)anthranilate isomerase from Pseudomonas putida (strain ATCC 700007 / DSM 6899 / JCM 31910 / BCRC 17059 / LMG 24140 / F1).